We begin with the raw amino-acid sequence, 334 residues long: Cell division protein ZipA (334 aa).

The Periplasmic portion of the chain corresponds to 1 to 2; the sequence is ME. Residues 3–23 form a helical membrane-spanning segment; it reads LHIIFLILGGLLIVLLAGFSI. Over 24 to 334 the chain is Cytoplasmic; it reads YSARREKSRI…DRQAYFARVS (311 aa).

It belongs to the ZipA family. In terms of assembly, interacts with FtsZ via their C-terminal domains.

The protein resides in the cell inner membrane. Its function is as follows. Essential cell division protein that stabilizes the FtsZ protofilaments by cross-linking them and that serves as a cytoplasmic membrane anchor for the Z ring. Also required for the recruitment to the septal ring of downstream cell division proteins. In Haemophilus ducreyi (strain 35000HP / ATCC 700724), this protein is Cell division protein ZipA.